Consider the following 566-residue polypeptide: Viral IRF3-like protein (566 aa).

Disordered regions lie at residues 151 to 170 (PRPF…PAFC) and 176 to 236 (QTGA…VHTD).

This sequence belongs to the IRF family. In terms of assembly, interacts with host SKP2. Interacts with host USP7.

Plays a role in the inhibition of host immune response. Interferes with the transactivating potential of cellular IRFs IRF3 and IRF7 that play a critical role in the induction of IFNA and IFNB genes. Additionally, interferes with surface major histocompatibility complex class II (MHC-II) antigen presentation. This is Viral IRF3-like protein (vIRF-3) from Human herpesvirus 8 type P (isolate GK18) (HHV-8).